We begin with the raw amino-acid sequence, 122 residues long: UPF0102 protein CPR_1677 (122 aa).

Belongs to the UPF0102 family.

In Clostridium perfringens (strain SM101 / Type A), this protein is UPF0102 protein CPR_1677.